Here is a 432-residue protein sequence, read N- to C-terminus: Adenylosuccinate synthetase (432 aa).

Residues 13–19 and 41–43 each bind GTP; these read GDEGKGK and GHT. D14 acts as the Proton acceptor in catalysis. The Mg(2+) site is built by D14 and G41. IMP-binding positions include 14–17, 39–42, T130, R144, Q225, T240, and R304; these read DEGK and NAGH. H42 functions as the Proton donor in the catalytic mechanism. Substrate is bound at residue 300–306; sequence ATTGRRR. GTP-binding positions include R306, 332–334, and 415–417; these read KLD and STG.

Belongs to the adenylosuccinate synthetase family. In terms of assembly, homodimer. It depends on Mg(2+) as a cofactor.

Its subcellular location is the cytoplasm. It catalyses the reaction IMP + L-aspartate + GTP = N(6)-(1,2-dicarboxyethyl)-AMP + GDP + phosphate + 2 H(+). Its pathway is purine metabolism; AMP biosynthesis via de novo pathway; AMP from IMP: step 1/2. Its function is as follows. Plays an important role in the de novo pathway of purine nucleotide biosynthesis. Catalyzes the first committed step in the biosynthesis of AMP from IMP. The chain is Adenylosuccinate synthetase from Cronobacter sakazakii (strain ATCC BAA-894) (Enterobacter sakazakii).